The following is a 115-amino-acid chain: Toxin-like structure LSTX-D1 (115 aa).

The first 22 residues, 1-22 (MKVLVLFSVLFLTLFSYSSTEA), serve as a signal peptide directing secretion. A propeptide spanning residues 23–44 (IDEFDSDAEEDMLSLMANEQVR) is cleaved from the precursor. 4 cysteine pairs are disulfide-bonded: Cys48/Cys63, Cys55/Cys72, Cys62/Cys87, and Cys74/Cys85.

It belongs to the neurotoxin 19 (CSTX) family. 01 subfamily. In terms of tissue distribution, expressed by the venom gland.

It localises to the secreted. The sequence is that of Toxin-like structure LSTX-D1 from Lycosa singoriensis (Wolf spider).